A 609-amino-acid polypeptide reads, in one-letter code: Rhotekin-2 (609 aa).

The 77-residue stretch at 5 to 81 (SLRGPALRLA…LQKLEEQIAN (77 aa)) folds into the REM-1 domain. The stretch at 56-91 (KNLMVCNARLMAYTSELQKLEEQIANQTGRCDVKFE) forms a coiled coil. The PH domain occupies 286–393 (EDAFAGFLNQ…WMEAFWQHFF (108 aa)). Disordered regions lie at residues 495 to 520 (HDEKGKKRQAPLPPSDKLPFSLKSQS) and 554 to 609 (KPMA…QAQV). Residues 569–582 (RLSDGEHTDTKTNF) are compositionally biased toward basic and acidic residues.

In terms of tissue distribution, expressed in lymphocytes, CD4 positive T-cells and bone marrow-derived cells. Also expressed in lung, colon, thymus and brain.

Its function is as follows. May play an important role in lymphopoiesis. The sequence is that of Rhotekin-2 (RTKN2) from Homo sapiens (Human).